A 488-amino-acid polypeptide reads, in one-letter code: Ribulose bisphosphate carboxylase large chain (488 aa).

Residues asparagine 127 and threonine 177 each contribute to the substrate site. The active-site Proton acceptor is the lysine 179. Lysine 181 is a binding site for substrate. Residues lysine 205, aspartate 207, and glutamate 208 each coordinate Mg(2+). Lysine 205 is subject to N6-carboxylysine. Histidine 297 (proton acceptor) is an active-site residue. Substrate-binding residues include arginine 298, histidine 330, and serine 382.

The protein belongs to the RuBisCO large chain family. Type I subfamily. Heterohexadecamer of 8 large chains and 8 small chains. Requires Mg(2+) as cofactor.

Its subcellular location is the plastid. The protein localises to the chloroplast. The enzyme catalyses 2 (2R)-3-phosphoglycerate + 2 H(+) = D-ribulose 1,5-bisphosphate + CO2 + H2O. It catalyses the reaction D-ribulose 1,5-bisphosphate + O2 = 2-phosphoglycolate + (2R)-3-phosphoglycerate + 2 H(+). Functionally, ruBisCO catalyzes two reactions: the carboxylation of D-ribulose 1,5-bisphosphate, the primary event in carbon dioxide fixation, as well as the oxidative fragmentation of the pentose substrate in the photorespiration process. Both reactions occur simultaneously and in competition at the same active site. In Antithamnion sp. (Red alga), this protein is Ribulose bisphosphate carboxylase large chain.